The following is a 93-amino-acid chain: RNA-binding protein Hfq (93 aa).

Residues 9-68 (DPYLNALRRERIPVSIYLVNGIKLQGQIESFDQFVILLKNTVSQMVYKHAISTVVPARAI) enclose the Sm domain. Residues 70–81 (HNNNSNHAHQAA) show a composition bias toward low complexity. Positions 70 to 93 (HNNNSNHAHQAAPVQSAEVVEKVE) are disordered.

It belongs to the Hfq family. As to quaternary structure, homohexamer.

In terms of biological role, RNA chaperone that binds small regulatory RNA (sRNAs) and mRNAs to facilitate mRNA translational regulation in response to envelope stress, environmental stress and changes in metabolite concentrations. Also binds with high specificity to tRNAs. This is RNA-binding protein Hfq from Glaesserella parasuis serovar 5 (strain SH0165) (Haemophilus parasuis).